Here is a 439-residue protein sequence, read N- to C-terminus: Methionine aminopeptidase 2-1 (439 aa).

The interval 1 to 87 is disordered; sequence MSGGESRSPD…DKLFPSGNFP (87 aa). Positions 22–32 are enriched in acidic residues; sequence GGDDEESDGDG. The segment covering 47 to 61 has biased composition (basic residues); that stretch reads KKRKKRNKKKSKKKS. Position 190 (His-190) interacts with substrate. A divalent metal cation-binding residues include Asp-211, Asp-222, and His-291. His-299 contributes to the substrate binding site. A divalent metal cation-binding residues include Glu-324 and Glu-420.

It belongs to the peptidase M24A family. Methionine aminopeptidase eukaryotic type 2 subfamily. Co(2+) serves as cofactor. It depends on Zn(2+) as a cofactor. Mn(2+) is required as a cofactor. The cofactor is Fe(2+).

It localises to the cytoplasm. The catalysed reaction is Release of N-terminal amino acids, preferentially methionine, from peptides and arylamides.. Functionally, cotranslationally removes the N-terminal methionine from nascent proteins. The N-terminal methionine is often cleaved when the second residue in the primary sequence is small and uncharged (Met-Ala-, Cys, Gly, Pro, Ser, Thr, or Val). The sequence is that of Methionine aminopeptidase 2-1 from Chaetomium globosum (strain ATCC 6205 / CBS 148.51 / DSM 1962 / NBRC 6347 / NRRL 1970) (Soil fungus).